We begin with the raw amino-acid sequence, 1136 residues long: Coiled-coil domain-containing protein 136 (1136 aa).

Residues 1-46 (MQAMDGEVLLPALYEEEEEEEEEEEEVEEEQVEKGGSLGSLSMGKH) are disordered. A compositionally biased stretch (acidic residues) spans 14 to 31 (YEEEEEEEEEEEEVEEEQ). Serine 50 is subject to Phosphoserine. Coiled-coil stretches lie at residues 293 to 631 (VMQL…QNQE) and 681 to 730 (LQAL…QTQS). Disordered stretches follow at residues 741 to 773 (GKNSGSRAPSTENFHRSYESSIDENEGYQKSYV), 814 to 837 (GSVSSGETLHRSYASSSTDEDPAE), 965 to 990 (NRPSISSEARGKNVNKNMNKNANGVR), and 1040 to 1111 (KKER…PDPP). The segment covering 743–752 (NSGSRAPSTE) has biased composition (polar residues). Residues 839–972 (EDLEHFEETV…KENRPSISSE (134 aa)) are a coiled coil. The span at 976–989 (KNVNKNMNKNANGV) shows a compositional bias: low complexity. Residues 1017 to 1057 (YYKASQRRLDELMKEEKEIEEARKKEREKKAKKDLCKLATN) adopt a coiled-coil conformation. The span at 1040-1052 (KKEREKKAKKDLC) shows a compositional bias: basic and acidic residues. A compositionally biased stretch (acidic residues) spans 1067–1091 (EPTEDEEENFEEYREGEDESCEAAE). A helical transmembrane segment spans residues 1112 to 1132 (IFSLPLVGLVVISALLWCWWA).

In terms of tissue distribution, present at high level in testis (at protein level).

It localises to the cytoplasmic vesicle. It is found in the secretory vesicle. Its subcellular location is the acrosome membrane. May play a role in acrosome formation in spermatogenesis and in fertilization. The sequence is that of Coiled-coil domain-containing protein 136 (Ccdc136) from Mus musculus (Mouse).